A 510-amino-acid chain; its full sequence is ATP synthase subunit alpha (510 aa).

ATP is bound at residue 169-176 (GDRQTGKT).

Belongs to the ATPase alpha/beta chains family. As to quaternary structure, F-type ATPases have 2 components, CF(1) - the catalytic core - and CF(0) - the membrane proton channel. CF(1) has five subunits: alpha(3), beta(3), gamma(1), delta(1), epsilon(1). CF(0) has three main subunits: a(1), b(2) and c(9-12). The alpha and beta chains form an alternating ring which encloses part of the gamma chain. CF(1) is attached to CF(0) by a central stalk formed by the gamma and epsilon chains, while a peripheral stalk is formed by the delta and b chains.

It localises to the cell inner membrane. The enzyme catalyses ATP + H2O + 4 H(+)(in) = ADP + phosphate + 5 H(+)(out). Produces ATP from ADP in the presence of a proton gradient across the membrane. The alpha chain is a regulatory subunit. In Anaeromyxobacter dehalogenans (strain 2CP-1 / ATCC BAA-258), this protein is ATP synthase subunit alpha.